A 417-amino-acid chain; its full sequence is 4-hydroxy-3-methylbut-2-en-1-yl diphosphate synthase (flavodoxin) (417 aa).

[4Fe-4S] cluster contacts are provided by cysteine 303, cysteine 306, cysteine 349, and glutamate 356.

It belongs to the IspG family. It depends on [4Fe-4S] cluster as a cofactor.

The enzyme catalyses (2E)-4-hydroxy-3-methylbut-2-enyl diphosphate + oxidized [flavodoxin] + H2O + 2 H(+) = 2-C-methyl-D-erythritol 2,4-cyclic diphosphate + reduced [flavodoxin]. It participates in isoprenoid biosynthesis; isopentenyl diphosphate biosynthesis via DXP pathway; isopentenyl diphosphate from 1-deoxy-D-xylulose 5-phosphate: step 5/6. Its function is as follows. Converts 2C-methyl-D-erythritol 2,4-cyclodiphosphate (ME-2,4cPP) into 1-hydroxy-2-methyl-2-(E)-butenyl 4-diphosphate. In Mesorhizobium japonicum (strain LMG 29417 / CECT 9101 / MAFF 303099) (Mesorhizobium loti (strain MAFF 303099)), this protein is 4-hydroxy-3-methylbut-2-en-1-yl diphosphate synthase (flavodoxin).